The primary structure comprises 342 residues: Phosphoribosylformylglycinamidine cyclo-ligase (342 aa).

The protein belongs to the AIR synthase family.

Its subcellular location is the cytoplasm. It carries out the reaction 2-formamido-N(1)-(5-O-phospho-beta-D-ribosyl)acetamidine + ATP = 5-amino-1-(5-phospho-beta-D-ribosyl)imidazole + ADP + phosphate + H(+). It functions in the pathway purine metabolism; IMP biosynthesis via de novo pathway; 5-amino-1-(5-phospho-D-ribosyl)imidazole from N(2)-formyl-N(1)-(5-phospho-D-ribosyl)glycinamide: step 2/2. The sequence is that of Phosphoribosylformylglycinamidine cyclo-ligase from Staphylococcus aureus (strain bovine RF122 / ET3-1).